The primary structure comprises 400 residues: Probable vacuolar protease A (400 aa).

Positions 1–18 are cleaved as a signal peptide; the sequence is MKGSLLLAGATLLGCTSA. The propeptide at 19-72 is activation peptide; the sequence is KLHSLKLKKVSLKEQLEHADIDVQIKSLGQKYMGIRPEQHEQQMFKEQTPIEVE. The Peptidase A1 domain occupies 87–397; the sequence is YFSEISIGTP…DLGKGTVGLA (311 aa). Residue D105 is part of the active site. A disulfide bridge connects residues C118 and C123. An N-linked (GlcNAc...) asparagine glycan is attached at N140. D289 is an active-site residue. C323 and C356 are oxidised to a cystine. A glycan (N-linked (GlcNAc...) asparagine) is linked at N340.

It belongs to the peptidase A1 family.

The protein localises to the vacuole lumen. It localises to the secreted. It catalyses the reaction Hydrolysis of proteins with broad specificity for peptide bonds. Cleaves -Leu-Leu-|-Val-Tyr- bond in a synthetic substrate. Does not act on esters of Tyr or Arg.. Vacuolar aspartic endopeptidase which is probably also secreted and contributes to virulence. In Arthroderma benhamiae (strain ATCC MYA-4681 / CBS 112371) (Trichophyton mentagrophytes), this protein is Probable vacuolar protease A (PEP2).